The sequence spans 89 residues: Small ribosomal subunit protein uS15 (89 aa).

This sequence belongs to the universal ribosomal protein uS15 family. Part of the 30S ribosomal subunit. Forms a bridge to the 50S subunit in the 70S ribosome, contacting the 23S rRNA.

Its function is as follows. One of the primary rRNA binding proteins, it binds directly to 16S rRNA where it helps nucleate assembly of the platform of the 30S subunit by binding and bridging several RNA helices of the 16S rRNA. In terms of biological role, forms an intersubunit bridge (bridge B4) with the 23S rRNA of the 50S subunit in the ribosome. The chain is Small ribosomal subunit protein uS15 from Streptococcus suis (strain 98HAH33).